A 2073-amino-acid polypeptide reads, in one-letter code: Dedicator of cytokinesis protein 11 (2073 aa).

Position 12 is a phosphoserine (serine 12). At threonine 16 the chain carries Phosphothreonine. Residues serine 23 and serine 161 each carry the phosphoserine modification. Residues 165–272 (GVIKQGWLHK…WLIMLKKIIQ (108 aa)) form the PH domain. Residue tyrosine 248 is modified to Phosphotyrosine. Phosphoserine is present on residues serine 306 and serine 445. One can recognise a C2 DOCK-type domain in the interval 640–818 (KNHLYVYPLQ…PLLKIKTHLE (179 aa)). The interval 1227–1267 (QNGHGIKREDSRGSLIPEGATGFPDPGSTSENTRQSSSRSS) is disordered. Phosphoserine occurs at positions 1237 and 1240. Residues 1254–1267 (STSENTRQSSSRSS) are compositionally biased toward low complexity. The DOCKER domain maps to 1609–2036 (KSYASTPELR…LSDIIHEQIL (428 aa)).

This sequence belongs to the DOCK family. Interacts with CDC42. Expressed in spleen, thymus, mesenteric lymph nodes (MLN), bone marrow and peripheral blood lymphocytes. Enriched in B-cells from germinal centers. Expressed in B-, T- and dendritic cells as well as Purkinje cells.

Functionally, guanine nucleotide-exchange factor (GEF) that activates CDC42 by exchanging bound GDP for free GTP. Required for marginal zone (MZ) B-cell development, is associated with early bone marrow B-cell development, MZ B-cell formation, MZ B-cell number and marginal metallophilic macrophages morphology. Facilitates filopodia formation through the activation of CDC42. The protein is Dedicator of cytokinesis protein 11 of Mus musculus (Mouse).